The following is a 432-amino-acid chain: 3-phosphoshikimate 1-carboxyvinyltransferase (432 aa).

3-phosphoshikimate is bound by residues lysine 23, serine 24, and arginine 28. Lysine 23 contributes to the phosphoenolpyruvate binding site. The phosphoenolpyruvate site is built by glycine 95 and arginine 123. Residues serine 167, glutamine 169, aspartate 317, and lysine 344 each coordinate 3-phosphoshikimate. Glutamine 169 lines the phosphoenolpyruvate pocket. Aspartate 317 (proton acceptor) is an active-site residue. Positions 348 and 390 each coordinate phosphoenolpyruvate.

Belongs to the EPSP synthase family. Monomer.

Its subcellular location is the cytoplasm. The enzyme catalyses 3-phosphoshikimate + phosphoenolpyruvate = 5-O-(1-carboxyvinyl)-3-phosphoshikimate + phosphate. The protein operates within metabolic intermediate biosynthesis; chorismate biosynthesis; chorismate from D-erythrose 4-phosphate and phosphoenolpyruvate: step 6/7. Catalyzes the transfer of the enolpyruvyl moiety of phosphoenolpyruvate (PEP) to the 5-hydroxyl of shikimate-3-phosphate (S3P) to produce enolpyruvyl shikimate-3-phosphate and inorganic phosphate. In Staphylococcus aureus (strain JH9), this protein is 3-phosphoshikimate 1-carboxyvinyltransferase.